The primary structure comprises 145 residues: 3-hydroxyacyl-[acyl-carrier-protein] dehydratase FabZ (145 aa).

The active site involves His51.

It belongs to the thioester dehydratase family. FabZ subfamily.

The protein localises to the cytoplasm. The enzyme catalyses a (3R)-hydroxyacyl-[ACP] = a (2E)-enoyl-[ACP] + H2O. Functionally, involved in unsaturated fatty acids biosynthesis. Catalyzes the dehydration of short chain beta-hydroxyacyl-ACPs and long chain saturated and unsaturated beta-hydroxyacyl-ACPs. The polypeptide is 3-hydroxyacyl-[acyl-carrier-protein] dehydratase FabZ (Macrococcus caseolyticus (strain JCSC5402) (Macrococcoides caseolyticum)).